The primary structure comprises 313 residues: Potassium channel subfamily K member 6 (313 aa).

Residues 1-4 lie on the Cytoplasmic side of the membrane; the sequence is MRRG. Residues 5–25 traverse the membrane as a helical segment; sequence ALLAGALAAYAAYLVLGALLV. N-linked (GlcNAc...) asparagine glycans are attached at residues asparagine 79 and asparagine 85. Residues 90–115 constitute an intramembrane region (pore-forming); the sequence is AWDFASALFFASTLITTVGYGYTTPL. K(+) is bound by residues threonine 106, valine 107, glycine 108, and tyrosine 109. A selectivity filter 1 region spans residues 106–111; the sequence is TVGYGY. The helical transmembrane segment at 121 to 141 threads the bilayer; it reads AFSIAFALLGVPTTMLLLTAS. The Cytoplasmic portion of the chain corresponds to 142-172; that stretch reads AQRLSLLLTHVPLSWLSMRWGWDPRRAACWH. A helical transmembrane segment spans residues 173–193; it reads LVALLGVVVTVCFLVPAVIFA. The pore-forming intramembrane region spans 199 to 223; the sequence is WSFLDAFYFCFISLSTIGLGDYVPG. The K(+) site is built by threonine 214, isoleucine 215, and glycine 216. The segment at 214 to 219 is selectivity filter 2; sequence TIGLGD. A helical membrane pass occupies residues 236–256; the sequence is VLVTVYLFLGLVAMVLVLQTF. Residues 257-313 are Cytoplasmic-facing; the sequence is RHVSDLHGLTELILLPPPCPASFNADEDDRVDILGPQPESHQQLSASSHTDYASIPR. The Lysosomal targeting signal motif lies at 282-290; sequence DEDDRVDIL. The interval 288–313 is disordered; the sequence is DILGPQPESHQQLSASSHTDYASIPR. Residues 295-307 are compositionally biased toward polar residues; that stretch reads ESHQQLSASSHTD. Positions 308–312 match the Lysosomal targeting signal motif; the sequence is YASIP.

This sequence belongs to the two pore domain potassium channel (TC 1.A.1.8) family. As to quaternary structure, homodimer; disulfide-linked. Post-translationally, N-glycosylation is necessary for targeting to lysosomes. As to expression, widespread expression, detected in all tissues tested except for skeletal muscle. Strongest expression in placenta, pancreas, heart, colon and spleen, lower levels detected in peripheral blood leukocytes, lung, liver, kidney and thymus. Lowest expression detected in brain.

Its subcellular location is the late endosome membrane. It is found in the lysosome membrane. It carries out the reaction K(+)(in) = K(+)(out). K(+) channel that conducts outward rectifying currents at the membranes of the endolysosomal system. Active in lysosomes where it regulates lysosome numbers and size. In macrophages, enables K(+) efflux coupled to ATP-induced NLRP3 inflammasome activation upon bacterial infection. Cooperates with ATP-gated P2RX7 channels to activate NLRP3 inflammasome, with P2RX7 conducting Ca(2+) and Na(+) influx that sets the membrane potential for K(+) efflux. Its function is as follows. Does not display channel activity. The sequence is that of Potassium channel subfamily K member 6 from Homo sapiens (Human).